The following is a 431-amino-acid chain: 3-phosphoshikimate 1-carboxyvinyltransferase (431 aa).

The 3-phosphoshikimate site is built by lysine 21, serine 22, and arginine 26. Lysine 21 serves as a coordination point for phosphoenolpyruvate. Phosphoenolpyruvate is bound by residues glycine 93 and arginine 122. 4 residues coordinate 3-phosphoshikimate: serine 167, glutamine 169, aspartate 318, and lysine 345. Glutamine 169 is a binding site for phosphoenolpyruvate. Aspartate 318 (proton acceptor) is an active-site residue. Residues arginine 349 and arginine 391 each coordinate phosphoenolpyruvate.

The protein belongs to the EPSP synthase family. In terms of assembly, monomer.

It is found in the cytoplasm. It carries out the reaction 3-phosphoshikimate + phosphoenolpyruvate = 5-O-(1-carboxyvinyl)-3-phosphoshikimate + phosphate. Its pathway is metabolic intermediate biosynthesis; chorismate biosynthesis; chorismate from D-erythrose 4-phosphate and phosphoenolpyruvate: step 6/7. Its function is as follows. Catalyzes the transfer of the enolpyruvyl moiety of phosphoenolpyruvate (PEP) to the 5-hydroxyl of shikimate-3-phosphate (S3P) to produce enolpyruvyl shikimate-3-phosphate and inorganic phosphate. The protein is 3-phosphoshikimate 1-carboxyvinyltransferase of Roseiflexus castenholzii (strain DSM 13941 / HLO8).